The primary structure comprises 137 residues: Peptide methionine sulfoxide reductase MsrB (137 aa).

The MsrB domain occupies 7-129 (PDHPATELNE…NSASLSFTDG (123 aa)). Cys46, Cys49, Cys95, and Cys98 together coordinate Zn(2+). Cys118 functions as the Nucleophile in the catalytic mechanism.

It belongs to the MsrB Met sulfoxide reductase family. Requires Zn(2+) as cofactor.

The enzyme catalyses L-methionyl-[protein] + [thioredoxin]-disulfide + H2O = L-methionyl-(R)-S-oxide-[protein] + [thioredoxin]-dithiol. This is Peptide methionine sulfoxide reductase MsrB from Serratia proteamaculans (strain 568).